The following is a 390-amino-acid chain: GTP 3',8-cyclase, mitochondrial (390 aa).

A mitochondrion-targeting transit peptide spans Met1 to Phe45. Residues Lys69–Pro290 enclose the Radical SAM core domain. Arg78 lines the GTP pocket. The [4Fe-4S] cluster site is built by Cys85 and Cys89. Tyr91 is an S-adenosyl-L-methionine binding site. A [4Fe-4S] cluster-binding site is contributed by Cys92. Arg128 contributes to the GTP binding site. Position 132 (Gly132) interacts with S-adenosyl-L-methionine. Residue Thr159 participates in GTP binding. Residue Ser183 participates in S-adenosyl-L-methionine binding. Lys220 is a binding site for GTP. An S-adenosyl-L-methionine-binding site is contributed by Met254. Cys317 and Cys320 together coordinate [4Fe-4S] cluster. Arg322–Arg324 serves as a coordination point for GTP. Cys334 contacts [4Fe-4S] cluster.

Belongs to the radical SAM superfamily. MoaA family. Homodimer. Requires [4Fe-4S] cluster as cofactor. Expressed in all organs, with an abundant expression in the roots.

It is found in the mitochondrion matrix. The catalysed reaction is GTP + AH2 + S-adenosyl-L-methionine = (8S)-3',8-cyclo-7,8-dihydroguanosine 5'-triphosphate + 5'-deoxyadenosine + L-methionine + A + H(+). The protein operates within cofactor biosynthesis; molybdopterin biosynthesis. Its function is as follows. Catalyzes the cyclization of GTP to (8S)-3',8-cyclo-7,8-dihydroguanosine 5'-triphosphate. This chain is GTP 3',8-cyclase, mitochondrial (CNX2), found in Arabidopsis thaliana (Mouse-ear cress).